Reading from the N-terminus, the 2042-residue chain is Cell adhesion molecule DSCAML1 (2042 aa).

The first 17 residues, 1–17 (MWLVTFFLLYSLRKAHT), serve as a signal peptide directing secretion. At 18–1592 (EDVGTSLYFV…AQGEGDDVKK (1575 aa)) the chain is on the extracellular side. Residues N28 and N78 are each glycosylated (N-linked (GlcNAc...) asparagine). Ig-like C2-type domains lie at 37-107 (SSTV…AENS), 114-216 (PNIR…ARLS), 227-311 (PTML…GTLT), 315-403 (PLRV…SIIT), 409-502 (PRIV…ARIN), 507-587 (PSIR…LSIS), 597-686 (PPLI…RQLI), 691-785 (PRFV…MFLT), and 789-886 (PAMI…LTVQ). Cystine bridges form between C46/C102, C145/C197, C248/C295, C337/C387, and C430/C486. N-linked (GlcNAc...) asparagine glycosylation is found at N369, N472, N514, N557, N667, N711, N750, N797, and N810. 2 cysteine pairs are disulfide-bonded: C527–C576 and C618–C670. A disulfide bridge links C712 with C768. Cysteines 811 and 868 form a disulfide. Fibronectin type-III domains are found at residues 888–985 (PPDP…TEEA), 990–1089 (PPMD…TLED), 1094–1190 (PPEN…TKED), and 1194–1289 (PPAG…AGKA). N-linked (GlcNAc...) asparagine glycosylation is found at N927, N1083, N1145, N1163, N1276, and N1346. Residues 1279 to 1368 (EKVTIEPAGK…SGYYTCTATN (90 aa)) form the Ig-like C2-type 10 domain. C1312 and C1364 are oxidised to a cystine. 2 consecutive Fibronectin type-III domains span residues 1384–1478 (PPDQ…THGR) and 1479–1579 (EPSF…TIPP). N-linked (GlcNAc...) asparagine glycans are attached at residues N1493, N1532, and N1562. The chain crosses the membrane as a helical span at residues 1593–1613 (LFTIACPIILATLGVALLFII). Over 1614–2042 (RKKRKEKRLK…GAYSKSYTLV (429 aa)) the chain is Cytoplasmic. Disordered regions lie at residues 1716–1742 (PLIDMSDIRPGTNPVSRKSVKSAHSTR), 1781–1805 (SDSYSASLSQDTDKGRNSMVSTESA), 1841–1865 (SSDQMTTGTTDNADSMTSMSTPSEP), and 1940–2042 (PPAR…YTLV). The span at 1733-1742 (KSVKSAHSTR) shows a compositional bias: basic residues. Polar residues-rich tracts occupy residues 1781–1790 (SDSYSASLSQ) and 1841–1863 (SSDQMTTGTTDNADSMTSMSTPS). Positions 1951–1960 (AKPPGLPPPS) are enriched in pro residues. Low complexity predominate over residues 1961–1983 (SSSSSTTLPQRTLPMPTAASTAP). Residues 1984-1995 (APAPAPAAPAEP) show a composition bias toward pro residues. Composition is skewed to low complexity over residues 1996 to 2005 (PANTTTTTTT) and 2023 to 2034 (GAGRAQKQGAGA).

As to quaternary structure, homodimer; mediates homophilic interactions to promote cell adhesion. In terms of tissue distribution, SDK1, SDK2, DSCAM and DSCAML1 are expressed in non-overlapping subsets of interneurons and retinal ganglion cells (RGCs) that form synapses in distinct inner plexiform layer (IPL) sublaminae.

It localises to the cell membrane. It is found in the synapse. Functionally, cell adhesion molecule that plays a role in neuronal self-avoidance. Promotes repulsion between specific neuronal processes of either the same cell or the same subtype of cells. Adhesion molecule that promotes lamina-specific synaptic connections in the retina: expressed in specific subsets of interneurons and retinal ganglion cells (RGCs) and promotes synaptic connectivity via homophilic interactions. The sequence is that of Cell adhesion molecule DSCAML1 (DSCAML1) from Gallus gallus (Chicken).